A 425-amino-acid polypeptide reads, in one-letter code: Inhibin beta A chain (425 aa).

Positions 1 to 20 (MPLLWLRGFLLASCWIIVRS) are cleaved as a signal peptide. The propeptide occupies 21–309 (SPTPGSEGHS…EDHPHRRRRR (289 aa)). The N-linked (GlcNAc...) asparagine glycan is linked to N165. The interval 259 to 289 (KKKKKEEEGEGKKRDGEGGAGGDEEKEQSHR) is disordered. Over residues 263-275 (KEEEGEGKKRDGE) the composition is skewed to basic and acidic residues. Disulfide bonds link C313/C321, C320/C390, C349/C422, and C353/C424.

It belongs to the TGF-beta family. Dimeric, linked by one or more disulfide bonds. Inhibin A is a dimer of alpha/INHA and beta-A/INHBA. Activin A is a homodimer of beta-A/INHBA. Activin AB is a dimer of beta-A/INHBA and beta-B/INHBB. Interacts with FST and FSTL3; these interactions prevent activin A interaction to its type II receptor. Activin A interacts with ACVR2A. Activin A interacts with BMPR2. Inhibin A interacts with ACVR1; this interaction creates a non-signaling complex (NSC) that inhibits ACVR1-mediated BMP signaling. Inhibin A interacts with ACVR2A.

The protein localises to the secreted. Inhibins/activins are involved in regulating a number of diverse functions such as hypothalamic and pituitary hormone secretion, gonadal hormone secretion, germ cell development and maturation, erythroid differentiation, insulin secretion, nerve cell survival, embryonic axial development or bone growth, depending on their subunit composition. Its function is as follows. Activin A is a homodimer of INHBA that plays a role in several essential biological processes including embryonic development, stem cell maintenance and differentiation, haematopoiesis, cell proliferation and tissue fibrosis. Signals through type I (such as ACVR1B or ACVR1C) and type II receptors (such as ACVR2A, ACVR2B or BMPR2) which, upon ligand binding, phosphorylate SMAD2 and SMAD3 intracellular signaling mediators that form a complex with SMAD4, translocate to the nucleus and modulate gene expression. Can also activate alternative non-canonical intracellular signaling pathways including the p38 MAPK, extracellular signal-regulated kinases 1/2 (ERK1/2) and c-Jun N-terminal kinases (JNKs) to modulate cell migration and differentiation. Alternatively, promotes osteoblastic differentiation via ACVRL1-SMAD1/5/9 pathway. In addition, can engage the type I receptor ACVR1 to form an ACVR1-activin A-type II receptor non-signaling complex (NSC) that renders receptors unavailable for engagement with BMPs, hence resulting in an apparent inhibition of ACVR1-mediated BMP signaling. Functionally, inhibin A is a dimer of alpha/INHA and beta-A/INHBA that functions as a feedback regulator in the hypothalamic-pituitary-gonadal (HPG) axis. Inhibits the secretion of FSH from the anterior pituitary gland by acting on pituitary gonadotrope cells. Antagonizes activin A by binding to the proteoglycan, betaglycan, and forming a stable complex with and, thereby, sequestering type II activin receptors while excluding type I receptor. The protein is Inhibin beta A chain (INHBA) of Bos taurus (Bovine).